Reading from the N-terminus, the 121-residue chain is Cysteine-rich neurotrophic factor (121 aa).

Residues 1–18 form the signal peptide; sequence MLLKLIVALSLTLTLASA. N-linked (GlcNAc...) asparagine glycosylation occurs at N57.

It is found in the secreted. Interacts with the p75 low-affinity neurotrophin receptor. Evokes neurite outgrowth and modulated calcium currents in pedal motor neurons. May be involved in target-derived trophic support for motor neurons. This chain is Cysteine-rich neurotrophic factor, found in Lymnaea stagnalis (Great pond snail).